The following is a 146-amino-acid chain: Large ribosomal subunit protein bL9 (146 aa).

The protein belongs to the bacterial ribosomal protein bL9 family.

Its function is as follows. Binds to the 23S rRNA. The polypeptide is Large ribosomal subunit protein bL9 (Flavobacterium johnsoniae (strain ATCC 17061 / DSM 2064 / JCM 8514 / BCRC 14874 / CCUG 350202 / NBRC 14942 / NCIMB 11054 / UW101) (Cytophaga johnsonae)).